The chain runs to 113 residues: Large ribosomal subunit protein uL22 (113 aa).

Belongs to the universal ribosomal protein uL22 family. As to quaternary structure, part of the 50S ribosomal subunit.

In terms of biological role, this protein binds specifically to 23S rRNA; its binding is stimulated by other ribosomal proteins, e.g. L4, L17, and L20. It is important during the early stages of 50S assembly. It makes multiple contacts with different domains of the 23S rRNA in the assembled 50S subunit and ribosome. Functionally, the globular domain of the protein is located near the polypeptide exit tunnel on the outside of the subunit, while an extended beta-hairpin is found that lines the wall of the exit tunnel in the center of the 70S ribosome. The protein is Large ribosomal subunit protein uL22 of Roseiflexus castenholzii (strain DSM 13941 / HLO8).